Consider the following 400-residue polypeptide: Acetate kinase (400 aa).

Residue Asn-10 participates in Mg(2+) binding. Residue Lys-17 coordinates ATP. Arg-91 contacts substrate. Residue Asp-148 is the Proton donor/acceptor of the active site. ATP contacts are provided by residues 208 to 212 (HLGNG), 283 to 285 (DCR), and 331 to 335 (GIGEN). Position 385 (Glu-385) interacts with Mg(2+).

It belongs to the acetokinase family. As to quaternary structure, homodimer. It depends on Mg(2+) as a cofactor. Mn(2+) serves as cofactor.

The protein resides in the cytoplasm. The catalysed reaction is acetate + ATP = acetyl phosphate + ADP. It participates in metabolic intermediate biosynthesis; acetyl-CoA biosynthesis; acetyl-CoA from acetate: step 1/2. In terms of biological role, catalyzes the formation of acetyl phosphate from acetate and ATP. Can also catalyze the reverse reaction. This Shewanella putrefaciens (strain CN-32 / ATCC BAA-453) protein is Acetate kinase.